A 265-amino-acid chain; its full sequence is MNRLYPHPIIAREGWPIIGGGLALSLLVSMCCGWWSLPFWVFTVFALQFFRDPAREIPQNPEAVLSPVDGRIVVVERARDPYRDVDALKISIFMNVFNVHSQKSPADCTVTKVVYNKGKFVNADLDKASTENERNAVLATTASGREITFVQVAGLVARRILCYTQAGAKLSRGERYGFIRFGSRVDMYLPVDAQAQVAIGDKVNGVSTVLARLPLTAPQIESEPESEPALQTAPVETAANPSAEQRQIEAVAAKIQAAVQDVLKD.

Residue Ser183 is the Schiff-base intermediate with substrate; via pyruvic acid of the active site. Position 183 is a pyruvic acid (Ser); by autocatalysis (Ser183). The tract at residues 218-242 is disordered; it reads PQIESEPESEPALQTAPVETAANPS.

This sequence belongs to the phosphatidylserine decarboxylase family. PSD-A subfamily. In terms of assembly, heterodimer of a large membrane-associated beta subunit and a small pyruvoyl-containing alpha subunit. Requires pyruvate as cofactor. Is synthesized initially as an inactive proenzyme. Formation of the active enzyme involves a self-maturation process in which the active site pyruvoyl group is generated from an internal serine residue via an autocatalytic post-translational modification. Two non-identical subunits are generated from the proenzyme in this reaction, and the pyruvate is formed at the N-terminus of the alpha chain, which is derived from the carboxyl end of the proenzyme. The post-translation cleavage follows an unusual pathway, termed non-hydrolytic serinolysis, in which the side chain hydroxyl group of the serine supplies its oxygen atom to form the C-terminus of the beta chain, while the remainder of the serine residue undergoes an oxidative deamination to produce ammonia and the pyruvoyl prosthetic group on the alpha chain.

The protein localises to the cell membrane. It catalyses the reaction a 1,2-diacyl-sn-glycero-3-phospho-L-serine + H(+) = a 1,2-diacyl-sn-glycero-3-phosphoethanolamine + CO2. Its pathway is phospholipid metabolism; phosphatidylethanolamine biosynthesis; phosphatidylethanolamine from CDP-diacylglycerol: step 2/2. In terms of biological role, catalyzes the formation of phosphatidylethanolamine (PtdEtn) from phosphatidylserine (PtdSer). The sequence is that of Phosphatidylserine decarboxylase proenzyme from Neisseria meningitidis serogroup C (strain 053442).